Here is a 181-residue protein sequence, read N- to C-terminus: MASSIVSSAAVATRSNVAQASMVAPFTGLKSAASFPVTKKNNNVDITSLASNGGRVRCMQVWPPINMKKYETLSYLPDLSDEQLLKEVEYLLKNGWVPCLEFETEHGFVYRENHKSPGYYDGRYWTMWKLPMFGCTDATQVLAEVQEAKKAYPQAWIRIIGFDNVRQVQCISFIAYKPEGY.

Residues 1–57 (MASSIVSSAAVATRSNVAQASMVAPFTGLKSAASFPVTKKNNNVDITSLASNGGRVR) constitute a chloroplast transit peptide.

This sequence belongs to the RuBisCO small chain family. Heterohexadecamer of 8 large and 8 small subunits.

Its subcellular location is the plastid. The protein localises to the chloroplast. Functionally, ruBisCO catalyzes two reactions: the carboxylation of D-ribulose 1,5-bisphosphate, the primary event in carbon dioxide fixation, as well as the oxidative fragmentation of the pentose substrate. Both reactions occur simultaneously and in competition at the same active site. Although the small subunit is not catalytic it is essential for maximal activity. The sequence is that of Ribulose bisphosphate carboxylase small subunit, chloroplastic 6 from Solanum tuberosum (Potato).